Here is a 341-residue protein sequence, read N- to C-terminus: Holliday junction branch migration complex subunit RuvB (341 aa).

Residues 4-185 (TDRLIVPTAV…FGIVARLEFY (182 aa)) form a large ATPase domain (RuvB-L) region. ATP is bound by residues L24, R25, G66, K69, T70, T71, 132–134 (EDF), R175, Y185, and R222. A Mg(2+)-binding site is contributed by T70. The small ATPAse domain (RuvB-S) stretch occupies residues 186-256 (SAEELGYIVH…VADAALVMLD (71 aa)). The interval 259–341 (RAGLDVMDRK…ATPASDAELF (83 aa)) is head domain (RuvB-H). The DNA site is built by R295, R314, and R319.

This sequence belongs to the RuvB family. In terms of assembly, homohexamer. Forms an RuvA(8)-RuvB(12)-Holliday junction (HJ) complex. HJ DNA is sandwiched between 2 RuvA tetramers; dsDNA enters through RuvA and exits via RuvB. An RuvB hexamer assembles on each DNA strand where it exits the tetramer. Each RuvB hexamer is contacted by two RuvA subunits (via domain III) on 2 adjacent RuvB subunits; this complex drives branch migration. In the full resolvosome a probable DNA-RuvA(4)-RuvB(12)-RuvC(2) complex forms which resolves the HJ.

The protein localises to the cytoplasm. It catalyses the reaction ATP + H2O = ADP + phosphate + H(+). In terms of biological role, the RuvA-RuvB-RuvC complex processes Holliday junction (HJ) DNA during genetic recombination and DNA repair, while the RuvA-RuvB complex plays an important role in the rescue of blocked DNA replication forks via replication fork reversal (RFR). RuvA specifically binds to HJ cruciform DNA, conferring on it an open structure. The RuvB hexamer acts as an ATP-dependent pump, pulling dsDNA into and through the RuvAB complex. RuvB forms 2 homohexamers on either side of HJ DNA bound by 1 or 2 RuvA tetramers; 4 subunits per hexamer contact DNA at a time. Coordinated motions by a converter formed by DNA-disengaged RuvB subunits stimulates ATP hydrolysis and nucleotide exchange. Immobilization of the converter enables RuvB to convert the ATP-contained energy into a lever motion, pulling 2 nucleotides of DNA out of the RuvA tetramer per ATP hydrolyzed, thus driving DNA branch migration. The RuvB motors rotate together with the DNA substrate, which together with the progressing nucleotide cycle form the mechanistic basis for DNA recombination by continuous HJ branch migration. Branch migration allows RuvC to scan DNA until it finds its consensus sequence, where it cleaves and resolves cruciform DNA. The chain is Holliday junction branch migration complex subunit RuvB from Thiobacillus denitrificans (strain ATCC 25259 / T1).